The sequence spans 267 residues: Dihydropteroate synthase (267 aa).

A Pterin-binding domain is found at 1–251 (MTKTKIIGIL…NVDLNVKLAQ (251 aa)). A Mg(2+)-binding site is contributed by Asn11. (7,8-dihydropterin-6-yl)methyl diphosphate is bound by residues Thr51, Asp84, Asn103, Asp167, Lys203, and 239 to 241 (RVH).

Belongs to the DHPS family. Mg(2+) serves as cofactor.

It carries out the reaction (7,8-dihydropterin-6-yl)methyl diphosphate + 4-aminobenzoate = 7,8-dihydropteroate + diphosphate. It participates in cofactor biosynthesis; tetrahydrofolate biosynthesis; 7,8-dihydrofolate from 2-amino-4-hydroxy-6-hydroxymethyl-7,8-dihydropteridine diphosphate and 4-aminobenzoate: step 1/2. Functionally, catalyzes the condensation of para-aminobenzoate (pABA) with 6-hydroxymethyl-7,8-dihydropterin diphosphate (DHPt-PP) to form 7,8-dihydropteroate (H2Pte), the immediate precursor of folate derivatives. The chain is Dihydropteroate synthase (folP) from Staphylococcus haemolyticus.